We begin with the raw amino-acid sequence, 75 residues long: Penaeidin-3n (75 aa).

The N-terminal stretch at 1 to 19 (MRLVVCLVFLASFALVCQG) is a signal peptide. Glutamine 20 is modified (pyrrolidone carboxylic acid). 2 cysteine pairs are disulfide-bonded: cysteine 44–cysteine 59 and cysteine 48–cysteine 66. Serine 74 bears the Serine amide mark.

It belongs to the penaeidin family.

It localises to the cytoplasmic granule. Functionally, antibacterial and antifungal activity. Presents chitin-binding activity. This chain is Penaeidin-3n, found in Penaeus setiferus (Atlantic white shrimp).